Consider the following 169-residue polypeptide: MNAHAALTLYTDGACLGNPGPGGWAFALVPSDVPFLETGQXAPEAAAFTRSGSAYPSTNNRMELCAVINALQEAHGRAAEAVVVVTDSQYVRKGITQWIHTWKHNGWKTAAKQPVKNKDLWEALSALADALSVEWRWVKGHAGDPYNELCDRLATDAARRAAQSTADCP.

In terms of domain architecture, RNase H type-1 spans 3–159 (AHAALTLYTD…CDRLATDAAR (157 aa)). Positions 12, 63, 87, and 151 each coordinate Mg(2+).

This sequence belongs to the RNase H family. In terms of assembly, monomer. Requires Mg(2+) as cofactor.

It is found in the cytoplasm. The catalysed reaction is Endonucleolytic cleavage to 5'-phosphomonoester.. Endonuclease that specifically degrades the RNA of RNA-DNA hybrids. The polypeptide is Ribonuclease H (Treponema pallidum subsp. pallidum (strain SS14)).